Consider the following 243-residue polypeptide: MSRPVRNRKVVDYSQFQESDDADEDYGRDSGPPAKKIRSSPREAKNKRRSGKNSQEDSEDSEEKDVKTKKDDSHSAEDSEDEKEDHKNVRQQRQAASKAASKQREMLMEDVGSEEEQEEEDEAPFQEKDSGSDEDFLVEDDDDSDYGSSKKKNKKMVKKSKPERKEKKMPKPRLKATVTPSPVKGKGKVGRPTASKASKEKTPSPKEEDEEPESPLEKKASSSPPPEKSGDEGSEDDAQSGED.

The tract at residues 1–243 is disordered; the sequence is MSRPVRNRKV…SEDDAQSGED (243 aa). Position 13 is a phosphotyrosine (Y13). Phosphoserine is present on residues S14 and S19. A Phosphotyrosine modification is found at Y26. Over residues 35–51 the composition is skewed to basic residues; it reads KKIRSSPREAKNKRRSG. Phosphoserine is present on residues S54, S58, S61, S73, S75, and S79. Over residues 64-77 the composition is skewed to basic and acidic residues; sequence KDVKTKKDDSHSAE. Positions 91 to 100 are enriched in low complexity; the sequence is QQRQAASKAA. Residues 111-124 are compositionally biased toward acidic residues; that stretch reads VGSEEEQEEEDEAP. S113, S130, S132, and S144 each carry phosphoserine. The span at 132–145 shows a compositional bias: acidic residues; the sequence is SDEDFLVEDDDDSD. Over residues 149-174 the composition is skewed to basic residues; that stretch reads SKKKNKKMVKKSKPERKEKKMPKPRL. T179 is subject to Phosphothreonine. S181 carries the post-translational modification Phosphoserine. Over residues 197 to 206 the composition is skewed to basic and acidic residues; that stretch reads ASKEKTPSPK. Residue T202 is modified to Phosphothreonine. S204, S214, S223, S229, S234, and S240 each carry phosphoserine. Over residues 232 to 243 the composition is skewed to acidic residues; sequence EGSEDDAQSGED.

Does not interact with RAD51. Post-translationally, phosphorylated in an ATM-dependent manner in response to DNA damage. Phosphorylated by CDK1 and casein kinase.

Its subcellular location is the nucleus. It is found in the chromosome. In terms of biological role, chromatin-associated protein involved in DNA repair by promoting homologous recombination (HR). Binds double-stranded DNA (dsDNA) and secondary DNA structures, such as D-loop structures, but with less affinity than RAD51AP1. The sequence is that of Nuclear ubiquitous casein and cyclin-dependent kinase substrate 1 (NUCKS1) from Bos taurus (Bovine).